The chain runs to 416 residues: Serine hydroxymethyltransferase 1 (416 aa).

(6S)-5,6,7,8-tetrahydrofolate contacts are provided by residues Leu-121 and 125–127 (GHL). Lys-229 is subject to N6-(pyridoxal phosphate)lysine. (6S)-5,6,7,8-tetrahydrofolate is bound by residues Glu-245 and 354–356 (SPF).

Belongs to the SHMT family. Homodimer. The cofactor is pyridoxal 5'-phosphate.

It localises to the cytoplasm. It carries out the reaction (6R)-5,10-methylene-5,6,7,8-tetrahydrofolate + glycine + H2O = (6S)-5,6,7,8-tetrahydrofolate + L-serine. It functions in the pathway one-carbon metabolism; tetrahydrofolate interconversion. The protein operates within amino-acid biosynthesis; glycine biosynthesis; glycine from L-serine: step 1/1. In terms of biological role, catalyzes the reversible interconversion of serine and glycine with tetrahydrofolate (THF) serving as the one-carbon carrier. This reaction serves as the major source of one-carbon groups required for the biosynthesis of purines, thymidylate, methionine, and other important biomolecules. Also exhibits THF-independent aldolase activity toward beta-hydroxyamino acids, producing glycine and aldehydes, via a retro-aldol mechanism. The sequence is that of Serine hydroxymethyltransferase 1 from Vibrio parahaemolyticus serotype O3:K6 (strain RIMD 2210633).